A 745-amino-acid polypeptide reads, in one-letter code: Interleukin-17 receptor D (745 aa).

Residues 1–26 (MAGSRRLAHFFMASCLFLCYTASVNG) form the signal peptide. Residues 27-298 (GKRGNSDKCS…VHSPWAGPIR (272 aa)) lie on the Extracellular side of the membrane. Residues N61, N79, N136, N170, N205, and N276 are each glycosylated (N-linked (GlcNAc...) asparagine). A helical transmembrane segment spans residues 299–319 (AMAITVPLVIMSAFATLFTVM). The Cytoplasmic segment spans residues 320–745 (CRKKQQENIY…SEGLIAAAST (426 aa)). The 165-residue stretch at 354 to 518 (RPKIFICYSS…LMDQLPQLFA (165 aa)) folds into the SEFIR domain. Disordered stretches follow at residues 432–454 (RHRK…DSSS) and 631–713 (REDL…PPAV). Basic and acidic residues predominate over residues 439 to 448 (TSKEKNREPS). Residues 693-705 (SSLADSVSSSSGL) show a composition bias toward low complexity.

As to quaternary structure, interacts with fgfr1 and fgfr2.

The protein localises to the membrane. Functionally, feedback inhibitor of fibroblast growth factor mediated Ras-MAPK signaling and ERK activation. May inhibit FGF-induced FGFR1 tyrosine phosphorylation. This Danio rerio (Zebrafish) protein is Interleukin-17 receptor D (il17rd).